Here is a 310-residue protein sequence, read N- to C-terminus: Protein BCCIP homolog (310 aa).

The interval 1–59 (MASNAKRRALEPERLPERNEEEEDDMEGDNSDESDDIEDDESEEEEEVNEEVNIDFEAY) is disordered. Residues 8–18 (RALEPERLPER) show a composition bias toward basic and acidic residues. A compositionally biased stretch (acidic residues) spans 19–54 (NEEEEDDMEGDNSDESDDIEDDESEEEEEVNEEVNI).

This sequence belongs to the BCP1 family.

Its subcellular location is the nucleus. The protein resides in the cytoplasm. It is found in the cytoskeleton. It localises to the microtubule organizing center. The protein localises to the centrosome. Its subcellular location is the centriole. The protein resides in the spindle pole. Its function is as follows. During interphase, required for microtubule organizing and anchoring activities. During mitosis, required for the organization and stabilization of the spindle pole. May promote cell cycle arrest and DNA repair. In Xenopus tropicalis (Western clawed frog), this protein is Protein BCCIP homolog (bccip).